Consider the following 61-residue polypeptide: Double gene block protein 2 (61 aa).

Over 1-12 the chain is Cytoplasmic; that stretch reads MACCRCDSSPGD. The helical; Signal-anchor for type II membrane protein transmembrane segment at 13 to 33 threads the bilayer; that stretch reads YSGALLILFISFVFFYITSLS. Residues 34 to 61 are Lumenal-facing; that stretch reads PQGNTYVHHFDSSSVKTQYVGISTNGDG.

It belongs to the gammacarmovirus double gene block protein 2 family.

It is found in the host endoplasmic reticulum membrane. Cell-to-cell movement function. The sequence is that of Double gene block protein 2 from Melon necrotic spot virus (MNSV).